The following is a 415-amino-acid chain: MGSLGAILKHPDDFYPLLKLKIAARHAEKQIPSEPHWAFCYSMLHKVSRSFGLVIQQLGPQLRDAVCIFYLVLRALDTVEDDTSISTEVKVPIVMAFHCHIYDNDWHFSCGTKEYKVLMDEFHHVSNAFLDLGSSYKEAIEDITMRMGAGMAKFICKEVETIDDYDEYCHYVAGLVGLGLSKLFHASGAEDLATDSLSNSMGLFLQKTNIIRDYLEDINEIPKSRMFWPRQIWSKYVDKLEDLKYEENSAKAVQCLNDMVTDALVHAEDCLKYMSDLRGPAIFRFCAIPQIMAIGTLALCFNNTQVFRGVVKMRRGLTAKVIDQTKTMSDVYGAFFDFSCLLKSKVDNNDPNATKTLSRLEAIQKTCKESGTLSKRKSYIIESESGHNSALIAIIFIILAILYAYLSSNLLPNKQ.

2 helical membrane passes run 281-301 (AIFR…ALCF) and 391-411 (LIAI…SNLL).

Belongs to the phytoene/squalene synthase family. Mg(2+) is required as a cofactor. It depends on Mn(2+) as a cofactor.

Its subcellular location is the endoplasmic reticulum membrane. It catalyses the reaction 2 (2E,6E)-farnesyl diphosphate + NADH + H(+) = squalene + 2 diphosphate + NAD(+). The catalysed reaction is 2 (2E,6E)-farnesyl diphosphate + NADPH + H(+) = squalene + 2 diphosphate + NADP(+). It participates in terpene metabolism; lanosterol biosynthesis; lanosterol from farnesyl diphosphate: step 1/3. In terms of biological role, component of the triterpene saponins (e.g. ginsenosides or panaxosides) and phytosterols biosynthetic pathways. Catalyzes the biosynthesis of squalene. The polypeptide is Squalene synthase 12 (Panax ginseng (Korean ginseng)).